A 415-amino-acid polypeptide reads, in one-letter code: Hepatocyte nuclear factor 3-beta (415 aa).

A DNA-binding region (fork-head) is located at residues 150-244; that stretch reads KPPYSYISLI…ENGCYLRRQK (95 aa). Basic and acidic residues predominate over residues 251-262; that stretch reads KMSMKEPGRKGG. Residues 251–324 form a disordered region; it reads KMSMKEPGRK…GQHLMSQHHS (74 aa). Residues 266 to 277 show a composition bias toward low complexity; that stretch reads SANSSSDSCNGN. The span at 310–323 shows a compositional bias: polar residues; the sequence is SPVSQGQHLMSQHH.

Its subcellular location is the nucleus. Transcription activator for a number of liver genes. Interacts with the cis-acting regulatory regions of these genes. This chain is Hepatocyte nuclear factor 3-beta (foxa2), found in Oryzias latipes (Japanese rice fish).